The chain runs to 377 residues: Opsin-1 (377 aa).

The Extracellular portion of the chain corresponds to Met-1–Gly-58. A glycan (N-linked (GlcNAc...) asparagine) is linked at Asn-24. A helical transmembrane segment spans residues Phe-59 to Phe-79. Over Met-80 to Leu-92 the chain is Cytoplasmic. Residues Val-93 to Val-113 traverse the membrane as a helical segment. Residues Asn-114–Leu-129 lie on the Extracellular side of the membrane. Cys-127 and Cys-204 are disulfide-bonded. A helical transmembrane segment spans residues Tyr-130–Phe-150. Over Asp-151–Gly-169 the chain is Cytoplasmic. The helical transmembrane segment at Ala-170–Phe-190 threads the bilayer. The Extracellular segment spans residues Gly-191 to Leu-220. Residue Asn-200 is glycosylated (N-linked (GlcNAc...) asparagine). Residues Ile-221–Ile-241 traverse the membrane as a helical segment. Residues Val-242–Lys-280 are Cytoplasmic-facing. A helical transmembrane segment spans residues Val-281–Tyr-301. The Extracellular segment spans residues Thr-302–Pro-312. A helical transmembrane segment spans residues Leu-313–Ile-335. Over Ser-336–Ala-377 the chain is Cytoplasmic. Residues Pro-357–Ala-377 are disordered.

It belongs to the G-protein coupled receptor 1 family. Opsin subfamily. In terms of tissue distribution, in the retina, expression is abundant and uniform in the anterior-posterior and oblique cells of the retinulae, with some expression in the proximal cells. There is no expression in the dorsal rim retinulae (at protein level).

Its subcellular location is the cell projection. It is found in the rhabdomere membrane. Its function is as follows. Visual pigments are the light-absorbing molecules that mediate vision. They consist of an apoprotein, opsin, covalently linked to cis-retinal. May play a role in photoperiodic photoreception. The polypeptide is Opsin-1 (OP1) (Manduca sexta (Tobacco hawkmoth)).